The primary structure comprises 81 residues: N.vectensis toxin 4 (81 aa).

An N-terminal signal peptide occupies residues 1-20 (MRSSWMFVICFAMLILYTNG). Intrachain disulfides connect Cys-46–Cys-75, Cys-48–Cys-70, and Cys-63–Cys-76.

Expressed in ectodermal gland cells. In adult female tissues, highly transcribed in mesenteries (gametes-producing tissue) and slightly transcribed in tentacles, pharynx and physa.

Has toxic effects on zebrafish larvae. It causes contractile paralysis and twitching of the tail within 30 minutes, followed by death within 40 minutes. Does not show any toxicity when injected into arthropods (cherry shrimps or grass shrimps). The chain is N.vectensis toxin 4 from Nematostella vectensis (Starlet sea anemone).